A 262-amino-acid polypeptide reads, in one-letter code: Carboxy-S-adenosyl-L-methionine synthase (262 aa).

Residues Tyr-50, 84 to 86, 137 to 138, Asn-152, and Arg-219 each bind S-adenosyl-L-methionine; these read GCS and DI.

Belongs to the class I-like SAM-binding methyltransferase superfamily. Cx-SAM synthase family. As to quaternary structure, homodimer.

The enzyme catalyses prephenate + S-adenosyl-L-methionine = carboxy-S-adenosyl-L-methionine + 3-phenylpyruvate + H2O. Functionally, catalyzes the conversion of S-adenosyl-L-methionine (SAM) to carboxy-S-adenosyl-L-methionine (Cx-SAM). This chain is Carboxy-S-adenosyl-L-methionine synthase, found in Psychrobacter arcticus (strain DSM 17307 / VKM B-2377 / 273-4).